The following is a 149-amino-acid chain: Calmodulin, striated muscle (149 aa).

4 EF-hand domains span residues 8 to 43 (EQIA…LGQN), 44 to 79 (PTEA…KMRD), 81 to 116 (DSEE…LGEK), and 117 to 149 (LTDE…MTEK). Ca(2+) is bound by residues Asp21, Asp23, Asp25, Cys27, Glu32, Asp57, Asp59, Ser61, Thr63, Glu68, Asp94, Asp96, Asn98, Tyr100, and Glu105. N6,N6,N6-trimethyllysine is present on Lys116. Residues Asp130, Asn132, Asp134, Gln136, and Glu141 each contribute to the Ca(2+) site.

It belongs to the calmodulin family.

This Gallus gallus (Chicken) protein is Calmodulin, striated muscle (CCM1).